A 274-amino-acid polypeptide reads, in one-letter code: Transcription factor MYB32 (274 aa).

HTH myb-type domains are found at residues 9-61 and 62-116; these read KDHT…INYL and RPDL…KRKL. 2 DNA-binding regions (H-T-H motif) span residues 37 to 61 and 89 to 112; these read WRSL…INYL and WSLI…NTHV. The interval 123 to 144 is disordered; that stretch reads PATHRPINETKTSQDSSDSSKT.

As to expression, mostly expressed in roots, and, to a lower extent, in stems, flower buds, and siliques.

The protein resides in the nucleus. This is Transcription factor MYB32 (MYB32) from Arabidopsis thaliana (Mouse-ear cress).